Reading from the N-terminus, the 211-residue chain is Probable nicotinate-nucleotide adenylyltransferase (211 aa).

Belongs to the NadD family.

It carries out the reaction nicotinate beta-D-ribonucleotide + ATP + H(+) = deamido-NAD(+) + diphosphate. It participates in cofactor biosynthesis; NAD(+) biosynthesis; deamido-NAD(+) from nicotinate D-ribonucleotide: step 1/1. In terms of biological role, catalyzes the reversible adenylation of nicotinate mononucleotide (NaMN) to nicotinic acid adenine dinucleotide (NaAD). The sequence is that of Probable nicotinate-nucleotide adenylyltransferase from Legionella pneumophila (strain Paris).